The following is a 1199-amino-acid chain: Pyruvate-flavodoxin oxidoreductase (1199 aa).

2 consecutive 4Fe-4S ferredoxin-type domains span residues 699 to 728 and 755 to 784; these read EIPV…AKVY and FTIQ…EPSL. [4Fe-4S] cluster contacts are provided by Cys708, Cys711, Cys714, Cys718, Cys764, Cys767, Cys770, Cys774, Cys838, Cys841, Cys866, and Cys1103.

It belongs to the pyruvate:ferredoxin/flavodoxin oxidoreductase family. The cofactor is [4Fe-4S] cluster.

The catalysed reaction is oxidized [flavodoxin] + pyruvate + CoA + 2 H(+) = reduced [flavodoxin] + acetyl-CoA + CO2. Its function is as follows. Oxidoreductase required for the transfer of electrons from pyruvate to flavodoxin, which reduces nitrogenase. This is Pyruvate-flavodoxin oxidoreductase (nifJ) from Nostoc sp. (strain PCC 7120 / SAG 25.82 / UTEX 2576).